The primary structure comprises 118 residues: Myotrophin (118 aa).

ANK repeat units follow at residues 1–30 (MGDK…DVNR), 34–65 (GGRK…NAAD), and 67–98 (HGIT…NVKG).

It belongs to the myotrophin family.

The protein resides in the cytoplasm. The protein localises to the nucleus. It is found in the perinuclear region. Regulates NF-kappa-B transcription factor activity. Promotes growth of cardiomyocytes, but not cardiomyocyte proliferation. Promotes cardiac muscle hypertrophy. Plays a role in the regulation of the growth of actin filaments. Inhibits the activity of the F-actin-capping protein complex. This is Myotrophin (mtpn) from Xenopus laevis (African clawed frog).